The following is a 1478-amino-acid chain: Phospholipase B1, membrane-associated (1478 aa).

The first 27 residues, 1–27 (MELYPGVSPVGLLLLLLLGQGPSQIHG), serve as a signal peptide directing secretion. Over 28-1422 (SSGENTLAWQ…KAEEPSNALY (1395 aa)) the chain is Extracellular. A run of 4 repeats spans residues 43–351 (WTLK…YKNS), 366–711 (MKEG…TKNS), 712–1058 (NLGN…FRNS), and 1068–1407 (IENW…LRNS). Residues 43 to 1407 (WTLKNFPFPC…RPFLYTLRNS (1365 aa)) are 4 X 308-326 AA approximate repeats. N-linked (GlcNAc...) asparagine glycosylation is present at Asn-180. Active-site residues include Ser-404 and Asp-518. N-linked (GlcNAc...) asparagine glycans are attached at residues Asn-525, Asn-626, and Asn-637. His-659 is an active-site residue. 10 N-linked (GlcNAc...) asparagine glycosylation sites follow: Asn-715, Asn-764, Asn-787, Asn-801, Asn-830, Asn-926, Asn-1227, Asn-1280, Asn-1289, and Asn-1387. The necessary for membrane localization stretch occupies residues 1408-1450 (QLLPDKAEEPSNALYWAVPVAAIGGLAVGILGVMLWRTVKPVQ). A helical membrane pass occupies residues 1423-1443 (WAVPVAAIGGLAVGILGVMLW). Residues 1444 to 1478 (RTVKPVQQEEEEEDTLPNTSVTQDAVSEKRLKAGN) lie on the Cytoplasmic side of the membrane. The interval 1451-1478 (QEEEEEDTLPNTSVTQDAVSEKRLKAGN) is disordered. The span at 1459–1468 (LPNTSVTQDA) shows a compositional bias: polar residues. Basic and acidic residues predominate over residues 1469 to 1478 (VSEKRLKAGN).

The protein belongs to the 'GDSL' lipolytic enzyme family. Phospholipase B1 subfamily. Post-translationally, undergoes proteolytic cleavage in the ileum.

The protein resides in the apical cell membrane. It carries out the reaction a 1,2-diacyl-sn-glycero-3-phosphocholine + H2O = a 1-acyl-sn-glycero-3-phosphocholine + a fatty acid + H(+). The catalysed reaction is a 1-O-alkyl-2-acyl-sn-glycero-3-phosphocholine + H2O = a 1-O-alkyl-sn-glycero-3-phosphocholine + a fatty acid + H(+). The enzyme catalyses a 1-acyl-sn-glycero-3-phosphocholine + H2O = sn-glycerol 3-phosphocholine + a fatty acid + H(+). It catalyses the reaction a triacylglycerol + H2O = a diacylglycerol + a fatty acid + H(+). It carries out the reaction 1,2-dihexadecanoyl-sn-glycero-3-phosphocholine + H2O = 1-hexadecanoyl-sn-glycero-3-phosphocholine + hexadecanoate + H(+). The catalysed reaction is 1-hexadecanoyl-2-(9Z-octadecenoyl)-sn-glycero-3-phosphocholine + H2O = 1-hexadecanoyl-sn-glycero-3-phosphocholine + (9Z)-octadecenoate + H(+). The enzyme catalyses 1,2-di-(9Z-octadecenoyl)-sn-glycero-3-phosphocholine + H2O = 1-(9Z-octadecenoyl)-sn-glycero-3-phosphocholine + (9Z)-octadecenoate + H(+). It catalyses the reaction 1-hexadecanoyl-2-(9Z,12Z-octadecadienoyl)-sn-glycero-3-phosphocholine + H2O = (9Z,12Z)-octadecadienoate + 1-hexadecanoyl-sn-glycero-3-phosphocholine + H(+). It carries out the reaction 1-hexadecanoyl-2-(9Z,12Z-octadecadienoyl)-sn-glycero-3-phosphocholine + H2O = 2-(9Z,12Z-octadecadienoyl)-sn-glycero-3-phosphocholine + hexadecanoate + H(+). The catalysed reaction is 1-hexadecanoyl-2-(9Z-octadecenoyl)-sn-glycero-3-phosphoethanolamine + H2O = 1-hexadecanoyl-sn-glycero-3-phosphoethanolamine + (9Z)-octadecenoate + H(+). The enzyme catalyses 1-hexadecanoyl-2-(9Z-octadecenoyl)-sn-glycero-3-phospho-(1'-sn-glycerol) + H2O = 1-hexadecanoyl-sn-glycero-3-phospho-(1'-sn-glycerol) + (9Z)-octadecenoate + H(+). It catalyses the reaction 1,2-dihexadecanoyl-sn-glycero-3-phosphocholine + 2 H2O = sn-glycerol 3-phosphocholine + 2 hexadecanoate + 2 H(+). It carries out the reaction 1-O-hexadecyl-2-(9Z)-octadecenoyl-sn-glycero-3-phosphocholine + H2O = 1-O-hexadecyl-sn-glycero-3-phosphocholine + (9Z)-octadecenoate + H(+). The catalysed reaction is 1-hexadecanoyl-sn-glycero-3-phosphocholine + H2O = sn-glycerol 3-phosphocholine + hexadecanoate + H(+). The enzyme catalyses 1,2,3-tri-(9Z-octadecenoyl)-glycerol + H2O = di-(9Z)-octadecenoylglycerol + (9Z)-octadecenoate + H(+). It catalyses the reaction 1-hexadecanoyl-2-(9Z)-octadecenoyl-3-octadecanoyl-sn-glycerol + H2O = 1-hexadecanoyl-2-(9Z-octadecenoyl)-sn-glycerol + octadecanoate + H(+). It carries out the reaction 1,3-dihexadecanoyl-2-(9Z-octadecenoyl)glycerol + H2O = 1,3-dihexadecanoylglycerol + (9Z)-octadecenoate + H(+). The catalysed reaction is 1,3-dihexadecanoyl-2-(9Z-octadecenoyl)glycerol + H2O = 1-hexadecanoyl-2-(9Z-octadecenoyl)-glycerol + hexadecanoate + H(+). The enzyme catalyses 1-hexadecanoyl-2-(9Z)-octadecenoyl-3-octadecanoyl-sn-glycerol + H2O = 1-hexadecanoyl-3-octadecanoyl-sn-glycerol + (9Z)-octadecenoate + H(+). It catalyses the reaction 1-hexadecanoyl-2-(9Z)-octadecenoyl-3-octadecanoyl-sn-glycerol + H2O = 2-(9Z-octadecenoyl)-3-octadecanoyl-sn-glycerol + hexadecanoate + H(+). It carries out the reaction 1-octadecanoyl-2-(9Z,12Z)-octadecadienoyl-sn-glycerol + H2O = 1-octadecanoyl-sn-glycerol + (9Z,12Z)-octadecadienoate + H(+). The catalysed reaction is 1,2-di-(9Z-octadecenoyl)-sn-glycerol + H2O = 1-(9Z-octadecenoyl)-sn-glycerol + (9Z)-octadecenoate + H(+). The enzyme catalyses 2,3-di-(9Z)-octadecenoyl-sn-glycerol + H2O = 3-(9Z-octadecenoyl)-sn-glycerol + (9Z)-octadecenoate + H(+). It catalyses the reaction 1,3-di-(9Z-octadecenoyl)-glycerol + H2O = 1-(9Z-octadecenoyl)-glycerol + (9Z)-octadecenoate + H(+). It carries out the reaction 1-(9Z-octadecenoyl)-glycerol + H2O = glycerol + (9Z)-octadecenoate + H(+). The catalysed reaction is 2-(9Z-octadecenoyl)-glycerol + H2O = glycerol + (9Z)-octadecenoate + H(+). Functionally, calcium-independent membrane-associated phospholipase that catalyzes complete diacylation of phospholipids by hydrolyzing both sn-1 and sn-2 fatty acyl chains attached to the glycerol backbone (phospholipase B activity). Has dual phospholipase and lysophospholipase activities toward diacylphospholipids. Preferentially cleaves sn-2 ester bonds over sn-1 bonds. Acts as a lipase toward glycerolipid substrates. Hydrolyzes fatty acyl chains of diacylglycerols with preference for the sn-2 position and of triacylglycerols with not positional selectivity. May also hydrolyze long chain retinyl esters such as retinyl palmitate. May contribute to digestion of dietary phospholipids, glycerolipids and retinoids, facilitating lipid absorption at the brush border. In Mus musculus (Mouse), this protein is Phospholipase B1, membrane-associated (Plb1).